The following is a 75-amino-acid chain: Small ribosomal subunit protein bS21 (75 aa).

Positions 52–75 are disordered; it reads RRARKLARKRAQREGLIGGRPGAR. Positions 53–62 are enriched in basic residues; it reads RARKLARKRA.

It belongs to the bacterial ribosomal protein bS21 family.

This chain is Small ribosomal subunit protein bS21, found in Brucella anthropi (strain ATCC 49188 / DSM 6882 / CCUG 24695 / JCM 21032 / LMG 3331 / NBRC 15819 / NCTC 12168 / Alc 37) (Ochrobactrum anthropi).